The sequence spans 589 residues: Actin-histidine N-methyltransferase (589 aa).

The disordered stretch occupies residues 1-22; sequence MGKKSRVKTQKSGTGATATVSP. The segment covering 10–20 has biased composition (polar residues); it reads QKSGTGATATV. S-adenosyl-L-methionine is bound by residues R75, 104 to 106, R254, 275 to 279, and 325 to 327; these read EGF, DMCNH, and SGF. An SET domain is found at 94–314; the sequence is EGFEMVNFKE…AGEQIYIFYG (221 aa). S513 carries the phosphoserine modification. Residues 547-589 are disordered; that stretch reads LVNGERSFPNGTRSEEDLKQEERKRAKGDAKESSSDSTDAVKE. Positions 559 to 589 are enriched in basic and acidic residues; sequence RSEEDLKQEERKRAKGDAKESSSDSTDAVKE.

It belongs to the class V-like SAM-binding methyltransferase superfamily. SETD3 actin-histidine methyltransferase family. Interacts with MYOD1. In terms of processing, phosphorylated by GSK3B, which is required for recognition by the SCF(FBXW7) complex and subsequent degradation. Ubiquitinated by the SCF(FBXW7) complex following phosphorylation by GSK3B, leading to its degradation by the proteasome.

It localises to the cytoplasm. It is found in the nucleus. The enzyme catalyses L-histidyl-[protein] + S-adenosyl-L-methionine = N(tele)-methyl-L-histidyl-[protein] + S-adenosyl-L-homocysteine + H(+). Protein-histidine N-methyltransferase that specifically mediates 3-methylhistidine (tele-methylhistidine) methylation of actin at 'His-73'. Histidine methylation of actin is required for smooth muscle contraction of the laboring uterus during delivery. Does not have protein-lysine N-methyltransferase activity and probably only catalyzes histidine methylation of actin. The sequence is that of Actin-histidine N-methyltransferase from Dasypus novemcinctus (Nine-banded armadillo).